The chain runs to 616 residues: Chaperone protein HtpG (616 aa).

An a; substrate-binding region spans residues 1 to 334 (MAEKQIHTFQ…TADLPLNVSR (334 aa)). A b region spans residues 335-549 (EILQGNKVVD…ENEMGGNMER (215 aa)). The c stretch occupies residues 550–616 (IMKSLGQDVP…FVKRINKLIN (67 aa)).

It belongs to the heat shock protein 90 family. As to quaternary structure, homodimer.

It localises to the cytoplasm. Its function is as follows. Molecular chaperone. Has ATPase activity. This is Chaperone protein HtpG from Ruthia magnifica subsp. Calyptogena magnifica.